The primary structure comprises 262 residues: Oxidoreductase AgnL4 (262 aa).

It belongs to the avfA family.

Its pathway is secondary metabolite biosynthesis. Its function is as follows. Oxidoreductase; part of the gene cluster that mediates the biosynthesis of agnestins, dihydroxy-xanthone metabolites. The pathway begins with the assembly and cyclization of atrochrysone thioester by the non-reducing polyketide synthase Agnpks1. The atrochrysone carboxyl ACP thioesterase AgnL7 then breaks the thioester bond and releases the atrochrysone carboxylic acid as the first enzyme-free intermediate. The decarboxylase AgnL1 then catalyzes the concerted decarboxylation-elimination required to convert atochrysone carboxylic acid into emodin anthrone, which is further oxidized to emodin by the anthrone oxygenase AgnL2. Emodin then undergoes reduction catalyzed by the oxidoreductase AgnL4 to yield the dihydroquinone tautomer which is the substrate for reduction by the short chain dehydrogenase AgnL6 reduction to produce hydroxyketone, followed by AgnL8 dehydration and likely spontaneous autoxidation to chrysophanol. Baeyer-Villiger oxidation by the oxidase AgnL3 leads to monodictyphenone via cleavage of the C-10/C-10a bond of chrysophanol. Alternative cleavage at the C-4a/C-10 bond of chrysophanol also leads to the formation some cephalone F. Further conversion to agnestins A and B, requires reduction to dihydro-monodictyphenone, oxidation to agnestin C probably via an epoxide, and rearrangement to either agnestin A or agnestin B directly, although agnestin A or agnestin B can also interconvert. Within the cluster, AgnR1 is the only unassigned oxidoreductase present which could be involved in this conversion. However, AgnR1 seems not to be involved in this step, and thus genes involved in the proposed oxidation/reduction may be located elsewhere on the genome. Further agnestin A derivatives are probably formed by spontaneous decarboxylations, dehydrations and methanolysis reactions. This is Oxidoreductase AgnL4 from Paecilomyces divaricatus (Penicillium divaricatum).